The primary structure comprises 230 residues: Geranylgeranylglyceryl phosphate synthase (230 aa).

Residue K13 coordinates sn-glycerol 1-phosphate. Residues D15 and T41 each coordinate Mg(2+). Sn-glycerol 1-phosphate is bound by residues 161–166 (YIEYSG), G191, and 211–212 (GN).

This sequence belongs to the GGGP/HepGP synthase family. Group I subfamily. It depends on Mg(2+) as a cofactor.

The protein resides in the cytoplasm. The catalysed reaction is sn-glycerol 1-phosphate + (2E,6E,10E)-geranylgeranyl diphosphate = sn-3-O-(geranylgeranyl)glycerol 1-phosphate + diphosphate. The protein operates within membrane lipid metabolism; glycerophospholipid metabolism. Its function is as follows. Prenyltransferase that catalyzes the transfer of the geranylgeranyl moiety of geranylgeranyl diphosphate (GGPP) to the C3 hydroxyl of sn-glycerol-1-phosphate (G1P). This reaction is the first ether-bond-formation step in the biosynthesis of archaeal membrane lipids. The protein is Geranylgeranylglyceryl phosphate synthase of Methanoculleus marisnigri (strain ATCC 35101 / DSM 1498 / JR1).